A 486-amino-acid polypeptide reads, in one-letter code: Arginine/agmatine antiporter (486 aa).

The next 12 helical transmembrane spans lie at 12–32 (LGAI…GIFS), 41–61 (AGAG…FFIA), 85–105 (GFGP…QIFG), 129–149 (NTIP…FIVL), 160–180 (IIGT…TAFA), 211–231 (STML…VMSA), 242–262 (ATLL…ILPF), 296–316 (VGLL…VAEI), 341–361 (LSLY…YFST), 367–387 (MLSI…AFLF), 418–438 (LWLI…LLAL), and 461–481 (EVTK…LFST).

The protein belongs to the amino acid-polyamine-organocation (APC) superfamily. Basic amino acid/polyamine antiporter (APA) (TC 2.A.3.2) family.

Its subcellular location is the cell inner membrane. In terms of biological role, catalyzes the exchange of L-arginine for agmatine. The arginine uptake by the bacterium in the macrophage may be a virulence factor against the host innate immune response. The polypeptide is Arginine/agmatine antiporter (aaxC) (Chlamydia caviae (strain ATCC VR-813 / DSM 19441 / 03DC25 / GPIC) (Chlamydophila caviae)).